A 56-amino-acid chain; its full sequence is Secreted virulence factor CLU5a (56 aa).

An N-terminal signal peptide occupies residues 1–18 (MKVSLTLLATLCASLASA).

Belongs to the MC69 virulence factor family. Homodimer; disulfide-linked. Dimerization can possibly extend to multimerisation.

It localises to the secreted. Secreted protein required for appressorial penetration of intact host epidermal cells and for pathogenicit, but not for subsequent biotrophic and necrotrophic colonization of leaves. In Colletotrichum graminicola (strain M1.001 / M2 / FGSC 10212) (Maize anthracnose fungus), this protein is Secreted virulence factor CLU5a.